Here is a 448-residue protein sequence, read N- to C-terminus: Argininosuccinate synthase (448 aa).

ATP is bound by residues 17–25 (AFSGGLDTS) and Ala43. Tyr99 contributes to the L-citrulline binding site. ATP-binding residues include Gly129 and Thr131. L-aspartate-binding residues include Thr131, Asn135, and Asp136. Asn135 contacts L-citrulline. ATP is bound at residue Asp136. Arg139 and Ser192 together coordinate L-citrulline. Asp194 is a binding site for ATP. 3 residues coordinate L-citrulline: Thr201, Glu203, and Glu280.

Belongs to the argininosuccinate synthase family. Type 2 subfamily. As to quaternary structure, homotetramer.

The protein localises to the cytoplasm. It carries out the reaction L-citrulline + L-aspartate + ATP = 2-(N(omega)-L-arginino)succinate + AMP + diphosphate + H(+). It participates in amino-acid biosynthesis; L-arginine biosynthesis; L-arginine from L-ornithine and carbamoyl phosphate: step 2/3. The protein is Argininosuccinate synthase of Enterobacter sp. (strain 638).